Here is a 406-residue protein sequence, read N- to C-terminus: Phosphopentomutase (406 aa).

Mn(2+) contacts are provided by Asp10, Asp305, His310, Asp346, His347, and His358.

The protein belongs to the phosphopentomutase family. It depends on Mn(2+) as a cofactor.

The protein localises to the cytoplasm. It catalyses the reaction 2-deoxy-alpha-D-ribose 1-phosphate = 2-deoxy-D-ribose 5-phosphate. The enzyme catalyses alpha-D-ribose 1-phosphate = D-ribose 5-phosphate. It functions in the pathway carbohydrate degradation; 2-deoxy-D-ribose 1-phosphate degradation; D-glyceraldehyde 3-phosphate and acetaldehyde from 2-deoxy-alpha-D-ribose 1-phosphate: step 1/2. Isomerase that catalyzes the conversion of deoxy-ribose 1-phosphate (dRib-1-P) and ribose 1-phosphate (Rib-1-P) to deoxy-ribose 5-phosphate (dRib-5-P) and ribose 5-phosphate (Rib-5-P), respectively. In Methylobacterium radiotolerans (strain ATCC 27329 / DSM 1819 / JCM 2831 / NBRC 15690 / NCIMB 10815 / 0-1), this protein is Phosphopentomutase.